The chain runs to 224 residues: uncharacterized protein (224 aa).

The first 30 residues, 1–30 (MSRSSSSMATVLVVLMVVSAGGLSPPCAAA), serve as a signal peptide directing secretion. An N-linked (GlcNAc...) asparagine glycan is attached at N141.

The protein resides in the secreted. This is an uncharacterized protein from Oryza sativa subsp. japonica (Rice).